Consider the following 304-residue polypeptide: Ribonuclease BN (304 aa).

Zn(2+) contacts are provided by H63, H65, D67, H68, H140, D211, and H269. The active-site Proton acceptor is D67.

The protein belongs to the RNase Z family. RNase BN subfamily. In terms of assembly, homodimer. Requires Zn(2+) as cofactor.

In terms of biological role, zinc phosphodiesterase, which has both exoribonuclease and endoribonuclease activities. This is Ribonuclease BN from Cronobacter sakazakii (strain ATCC BAA-894) (Enterobacter sakazakii).